A 203-amino-acid chain; its full sequence is Twist-related protein 1 (203 aa).

A compositionally biased stretch (low complexity) spans 1–18 (MMQDVSSSPVSPADDSLS). The interval 1 to 107 (MMQDVSSSPV…GGSPQSCEEL (107 aa)) is disordered. Positions 34-43 (RGGRKRRSSR) are enriched in basic residues. Composition is skewed to gly residues over residues 46-65 (AGGG…GGDE) and 80-100 (GCGG…GGGS). Positions 109–160 (TQRVMANVRERQRTQSLNEPFAALRKIIPTLPSDKLSKIQTLKLAARYIDFL) constitute a bHLH domain. Residues 162–192 (RVLQSDELDSKTASCSYVAHEWLSYAFSVWR) form a sufficient for transactivation activity region.

Efficient DNA binding requires dimerization with another bHLH protein. Homodimer or heterodimer with E proteins such as TCF3. ID1 binds preferentially to TCF3 but does not interact efficiently with TWIST1 so ID1 levels control the amount of TCF3 available to dimerize with TWIST and thus determine the type of dimer formed.

The protein resides in the nucleus. Functionally, acts as a transcriptional regulator. Inhibits myogenesis by sequestrating E proteins, inhibiting trans-activation by MEF2, and inhibiting DNA-binding by MYOD1 through physical interaction. This interaction probably involves the basic domains of both proteins. Also represses expression of pro-inflammatory cytokines such as TNFA and IL1B. Regulates cranial suture patterning and fusion. Activates transcription as a heterodimer with E proteins. Regulates gene expression differentially, depending on dimer composition. Homodimers induce expression of FGFR2 and POSTN while heterodimers repress FGFR2 and POSTN expression and induce THBS1 expression. Heterodimerization is also required for osteoblast differentiation. Represses the activity of the circadian transcriptional activator: NPAS2-BMAL1 heterodimer. The sequence is that of Twist-related protein 1 (TWIST1) from Gorilla gorilla gorilla (Western lowland gorilla).